Consider the following 200-residue polypeptide: Adenylate kinase (200 aa).

Position 10–15 (10–15) interacts with ATP; that stretch reads GAGKGT. The interval 30 to 59 is NMP; it reads STGDMLRAAVAAGTPVGLEAKAVMESGGLV. AMP contacts are provided by residues Thr31, Arg36, 57–59, 85–88, and Gln92; these read GLV and GFPR. Residues 126–142 form an LID region; sequence KRAAETLARGQAVRKDD. An ATP-binding site is contributed by Arg127. AMP contacts are provided by Arg139 and Arg150. Gln178 is an ATP binding site.

The protein belongs to the adenylate kinase family. In terms of assembly, monomer.

It localises to the cytoplasm. The enzyme catalyses AMP + ATP = 2 ADP. It functions in the pathway purine metabolism; AMP biosynthesis via salvage pathway; AMP from ADP: step 1/1. In terms of biological role, catalyzes the reversible transfer of the terminal phosphate group between ATP and AMP. Plays an important role in cellular energy homeostasis and in adenine nucleotide metabolism. The chain is Adenylate kinase from Methylobacterium radiotolerans (strain ATCC 27329 / DSM 1819 / JCM 2831 / NBRC 15690 / NCIMB 10815 / 0-1).